Here is a 146-residue protein sequence, read N- to C-terminus: Snaclec 1 (146 aa).

An N-terminal signal peptide occupies residues 1–23 (MGRFIFISFGLLVVFLSLSGTEA). Intrachain disulfides connect C25–C36, C53–C142, and C119–C134. Residues 32–143 (YEGHCYRVFD…CRNYGHFVCK (112 aa)) enclose the C-type lectin domain.

It belongs to the snaclec family. As to quaternary structure, heterodimer; disulfide-linked. In terms of tissue distribution, expressed by the venom gland.

Its subcellular location is the secreted. Functionally, interferes with one step of hemostasis (modulation of platelet aggregation, or coagulation cascade, for example). The chain is Snaclec 1 from Bitis arietans (African puff adder).